A 729-amino-acid polypeptide reads, in one-letter code: MLRALAPITVIRMTSTYKNRLGQEKSPYLLQHANNPIDWYPWGQEAFQKAKDNNKPIFLSVGYSTCHWCHVMEKESFENEATAKILNDNFVAIKVDREERPDVDKLYMAFVVASSGHGGWPMSVFLTPDLHPITGGTYFPPDDNRGMLGFPTILNMIHTEWKKEGESLKQRGAQIIKLLQPETASGDVNRSEEVFKSIYSHKQSSFDSRLGGFGRAPKFPKACDLDFLITFAASENESEKAKDSIMMLQKTLESMADGGIHDHIGNGFHRYSVGSEWHIPHFEKMLYDQSQLLATYSDFHKLTERKHDNVKHVINDIYQYMQKISHKDGGFYAAEDADSLPNHNSSNKVEGAFCAWEKEEIKQLLGDKKIGSASLFDVVADYFDVEDSGNVARSSDPHGELKNKNVLRKLLTDEECATNHEISVAELKKGIDEAKEILWNARTQRPSPHLDSKMVTSWQGLAITGLVKAYQATEETKYLDRAEKCAEFIGKFLDDNGELRRSVYLGANGEVEQGNQEIRAFSDDYAFLIQALLDLYTTVGKDEYLKKAVELQKICDVKFWNGNGYFISEKTDEDVSVRMIEDQDGAEPTATSIASNNLLRLYDILEKEEYREKANQCFRGASERLNTVPIALPKMAVALHRWQIGSTTFVLVGDPKSELLSETRSRLNQKFLNNLSVVHIQSEEDLSASGPSHKAMAEGPKPAVYMCKGFVCDRPVKAIQELEELFNKF.

This is an uncharacterized protein from Caenorhabditis elegans.